The chain runs to 121 residues: MKLTRKQATQRRHRRVRRKVFGTSERPRLAVFRSHQHIYAQIIDDTQHRTLAASSTLEPSVKNSELSSTSTCAASAIVGQLIAKKALEKGITQVVFDRGGKIYHGRVRTLAEAAREAGLQF.

This sequence belongs to the universal ribosomal protein uL18 family. Part of the 50S ribosomal subunit; contacts the 5S rRNA.

The protein localises to the plastid. It is found in the cyanelle. Binds 5S rRNA, forms part of the central protuberance of the 50S subunit. This Cyanophora paradoxa protein is Large ribosomal subunit protein uL18c (rpl18).